A 129-amino-acid polypeptide reads, in one-letter code: M-zodatoxin-Lt8b (129 aa).

The N-terminal stretch at 1-20 (MKYFVVALALVAAFACIAES) is a signal peptide. The propeptide occupies 21 to 60 (KPAESEHELAEVEEENELADLEDAVWLEHLADLSDLEEAR). Residues 57–60 (EEAR) carry the Processing quadruplet motif motif.

Post-translationally, cleavage of the propeptide depends on the processing quadruplet motif (XXXR, with at least one of X being E). In terms of tissue distribution, expressed by the venom gland.

It localises to the secreted. In terms of biological role, insecticidal, cytolytic and antimicrobial peptide. Forms voltage-dependent, ion-permeable channels in membranes. At high concentration causes cell membrane lysis. This Lachesana tarabaevi (Spider) protein is M-zodatoxin-Lt8b (cit 1-2).